Consider the following 216-residue polypeptide: Small ribosomal subunit protein uS4 (216 aa).

Residues 111-175 (RRLQTQVLRL…SPLVSESHPE (65 aa)) enclose the S4 RNA-binding domain. The disordered stretch occupies residues 194–216 (VAEAKQAKEKPPERGGRKRRGRR). The segment covering 198–208 (KQAKEKPPERG) has biased composition (basic and acidic residues).

The protein belongs to the universal ribosomal protein uS4 family. As to quaternary structure, part of the 30S ribosomal subunit. Contacts protein S5. The interaction surface between S4 and S5 is involved in control of translational fidelity.

Its function is as follows. One of the primary rRNA binding proteins, it binds directly to 16S rRNA where it nucleates assembly of the body of the 30S subunit. With S5 and S12 plays an important role in translational accuracy. The protein is Small ribosomal subunit protein uS4 of Methanosarcina barkeri (strain Fusaro / DSM 804).